A 393-amino-acid chain; its full sequence is tRNA(Met) cytidine acetate ligase (393 aa).

Positions 81, 142, and 167 each coordinate ATP.

It belongs to the TmcAL family.

Its subcellular location is the cytoplasm. It carries out the reaction cytidine(34) in elongator tRNA(Met) + acetate + ATP = N(4)-acetylcytidine(34) in elongator tRNA(Met) + AMP + diphosphate. Functionally, catalyzes the formation of N(4)-acetylcytidine (ac(4)C) at the wobble position of elongator tRNA(Met), using acetate and ATP as substrates. First activates an acetate ion to form acetyladenylate (Ac-AMP) and then transfers the acetyl group to tRNA to form ac(4)C34. The polypeptide is tRNA(Met) cytidine acetate ligase (Bacillus cereus (strain AH187)).